The chain runs to 232 residues: Phosphoribosylformylglycinamidine synthase subunit PurQ (232 aa).

In terms of domain architecture, Glutamine amidotransferase type-1 spans 2–232 (KIAILQFGGT…SMVDYITENF (231 aa)). The active-site Nucleophile is the Cys-86. Catalysis depends on residues His-203 and Glu-205.

As to quaternary structure, part of the FGAM synthase complex composed of 1 PurL, 1 PurQ and 2 PurS subunits.

The protein resides in the cytoplasm. The enzyme catalyses N(2)-formyl-N(1)-(5-phospho-beta-D-ribosyl)glycinamide + L-glutamine + ATP + H2O = 2-formamido-N(1)-(5-O-phospho-beta-D-ribosyl)acetamidine + L-glutamate + ADP + phosphate + H(+). It catalyses the reaction L-glutamine + H2O = L-glutamate + NH4(+). It participates in purine metabolism; IMP biosynthesis via de novo pathway; 5-amino-1-(5-phospho-D-ribosyl)imidazole from N(2)-formyl-N(1)-(5-phospho-D-ribosyl)glycinamide: step 1/2. Part of the phosphoribosylformylglycinamidine synthase complex involved in the purines biosynthetic pathway. Catalyzes the ATP-dependent conversion of formylglycinamide ribonucleotide (FGAR) and glutamine to yield formylglycinamidine ribonucleotide (FGAM) and glutamate. The FGAM synthase complex is composed of three subunits. PurQ produces an ammonia molecule by converting glutamine to glutamate. PurL transfers the ammonia molecule to FGAR to form FGAM in an ATP-dependent manner. PurS interacts with PurQ and PurL and is thought to assist in the transfer of the ammonia molecule from PurQ to PurL. This is Phosphoribosylformylglycinamidine synthase subunit PurQ from Methanosarcina barkeri (strain Fusaro / DSM 804).